The sequence spans 184 residues: MVELNPVTITNDNATPRGHVLKLILVESRDIIRAVKTRLCPQYTISYLAQAATVIAMLDTYSSKSELSKPDFFVALTVVNGRRYLREDLESNYLAGYVTGAPIKIEKLRSLLVSLDDSKDIIVSALEKAAKDAKRRLDMWIYDQSQLATGFRIHSFKGAMSSENPELFKKTAVPYLSSYGINEV.

H154 is a binding site for substrate.

It belongs to the trichothecene O-acetyltransferase family.

Its pathway is mycotoxin biosynthesis. In terms of biological role, trichothecene 15-O-acetyltransferase; part of the satratoxin SC2 cluster involved in the biosynthesis of satratoxins, trichothecene mycotoxins that are associated with human food poisonings. Satratoxins are suggested to be made by products of multiple gene clusters (SC1, SC2 and SC3) that encode 21 proteins in all, including polyketide synthases, acetyltransferases, and other enzymes expected to modify the trichothecene skeleton. SC1 encodes 10 proteins, SAT1 to SAT10. The largest are SAT8, which encodes a putative polyketide synthase (PKS) with a conventional non-reducing architecture, and SAT10, a putative protein containing four ankyrin repeats and thus may be involved in protein scaffolding. The putative short-chain reductase SAT3 may assist the PKS in some capacity. SAT6 contains a secretory lipase domain and acts probably as a trichothecene esterase. SAT5 encodes a putative acetyltransferase, and so, with SAT6, may affect endogenous protection from toxicity. The probable transcription factor SAT9 may regulate the expression of the SC1 cluster. SC2 encodes proteins SAT11 to SAT16, the largest of which encodes the putative reducing PKS SAT13. SAT11 is a cytochrome P450 monooxygenase, while SAT14 and SAT16 are probable acetyltransferases. The SC2 cluster may be regulated by the transcription factor SAT15. SC3 is a small cluster that encodes 5 proteins, SAT17 to SAT21. SAT21 is a putative MFS-type transporter which may have a role in exporting secondary metabolites. The four other proteins putatively encoded in SC3 include the taurine hydroxylase-like protein SAT17, the O-methyltransferase SAT18, the acetyltransferase SAT19, and the Cys6-type zinc finger SAT20, the latter being probably involved in regulation of SC3 expression. The sequence is that of Trichothecene 15-O-acetyltransferase SAT16 from Stachybotrys chartarum (strain CBS 109288 / IBT 7711) (Toxic black mold).